The chain runs to 215 residues: Adenylate kinase (215 aa).

10–15 (GAGKGT) serves as a coordination point for ATP. The segment at 30–59 (STGDMLREAVAAGTELGKKVKEIIEKGLLV) is NMP. Residues Thr-31, Arg-36, 57–59 (LLV), 85–88 (GFPR), and Gln-92 each bind AMP. The tract at residues 126–163 (SRRVCPSCGKVYNLLTIKPKNDMLCDDCNIGLIQREDD) is LID. Residue Arg-127 participates in ATP binding. Residues Cys-130 and Cys-133 each contribute to the Zn(2+) site. 136–137 (VY) is a binding site for ATP. Zn(2+) contacts are provided by Cys-150 and Cys-153. Residues Arg-160 and Arg-171 each coordinate AMP. Leu-199 serves as a coordination point for ATP.

The protein belongs to the adenylate kinase family. Monomer.

Its subcellular location is the cytoplasm. The catalysed reaction is AMP + ATP = 2 ADP. The protein operates within purine metabolism; AMP biosynthesis via salvage pathway; AMP from ADP: step 1/1. In terms of biological role, catalyzes the reversible transfer of the terminal phosphate group between ATP and AMP. Plays an important role in cellular energy homeostasis and in adenine nucleotide metabolism. The protein is Adenylate kinase of Kosmotoga olearia (strain ATCC BAA-1733 / DSM 21960 / TBF 19.5.1).